The following is a 382-amino-acid chain: Protein phosphatase 1A (382 aa).

A lipid anchor (N-myristoyl glycine) is attached at G2. Positions 23-291 (RYGLSSMQGW…DNMSVILICF (269 aa)) constitute a PPM-type phosphatase domain. Residues D60, G61, D239, and D282 each contribute to the Mn(2+) site. 2 positions are modified to phosphoserine: S375 and S377.

The protein belongs to the PP2C family. Monomer. Interacts with SMAD2; the interaction dephosphorylates SMAD2 in its C-terminal SXS motif resulting in disruption of the SMAD2/SMAD4 complex, SMAD2 nuclear export and termination of the TGF-beta-mediated signaling. Interacts with SMAD2; the interaction dephosphorylates SMAD2 in its C-terminal SXS motif resulting in disruption of the SMAD2/SMAD4 complex, SMAD2 nuclear export and termination of the TGF-beta-mediated signaling. Interacts with the phosphorylated form of IKBKB/IKKB. Mg(2+) is required as a cofactor. Mn(2+) serves as cofactor. Post-translationally, N-myristoylation is essential for the recognition of its substrates for dephosphorylation.

Its subcellular location is the nucleus. It localises to the cytoplasm. It is found in the cytosol. The protein localises to the membrane. The enzyme catalyses O-phospho-L-seryl-[protein] + H2O = L-seryl-[protein] + phosphate. It carries out the reaction O-phospho-L-threonyl-[protein] + H2O = L-threonyl-[protein] + phosphate. Functionally, enzyme with a broad specificity. Negatively regulates TGF-beta signaling through dephosphorylating SMAD2 and SMAD3, resulting in their dissociation from SMAD4, nuclear export of the SMADs and termination of the TGF-beta-mediated signaling. Dephosphorylates PRKAA1 and PRKAA2. Plays an important role in the termination of TNF-alpha-mediated NF-kappa-B activation through dephosphorylating and inactivating IKBKB/IKKB. This is Protein phosphatase 1A (PPM1A) from Bos taurus (Bovine).